Consider the following 182-residue polypeptide: Regulatory protein RecX (182 aa).

The interval 12 to 54 is disordered; that stretch reads LSQRDHSESELRRKLAAPPFSAKGNWGKRSGAKSSNLVESNPV. Residues 13–24 show a composition bias toward basic and acidic residues; that stretch reads SQRDHSESELRR. The segment covering 43–54 has biased composition (polar residues); sequence AKSSNLVESNPV.

It belongs to the RecX family.

The protein resides in the cytoplasm. Its function is as follows. Modulates RecA activity. This Yersinia pseudotuberculosis serotype I (strain IP32953) protein is Regulatory protein RecX.